A 312-amino-acid polypeptide reads, in one-letter code: Glyoxylate/hydroxypyruvate reductase A (312 aa).

Arg-227 is a catalytic residue. The active-site Proton donor is the His-275.

The protein belongs to the D-isomer specific 2-hydroxyacid dehydrogenase family. GhrA subfamily.

Its subcellular location is the cytoplasm. It catalyses the reaction glycolate + NADP(+) = glyoxylate + NADPH + H(+). It carries out the reaction (R)-glycerate + NAD(+) = 3-hydroxypyruvate + NADH + H(+). The catalysed reaction is (R)-glycerate + NADP(+) = 3-hydroxypyruvate + NADPH + H(+). In terms of biological role, catalyzes the NADPH-dependent reduction of glyoxylate and hydroxypyruvate into glycolate and glycerate, respectively. This chain is Glyoxylate/hydroxypyruvate reductase A, found in Klebsiella pneumoniae subsp. pneumoniae (strain ATCC 700721 / MGH 78578).